The sequence spans 238 residues: 3-dehydroquinate dehydratase (238 aa).

Residues 35–37 (ELR) and Arg70 contribute to the 3-dehydroquinate site. The Proton donor/acceptor role is filled by His133. Lys160 acts as the Schiff-base intermediate with substrate in catalysis. 3-dehydroquinate is bound by residues Arg202 and Gln225.

The protein belongs to the type-I 3-dehydroquinase family. As to quaternary structure, homodimer.

It catalyses the reaction 3-dehydroquinate = 3-dehydroshikimate + H2O. Its pathway is metabolic intermediate biosynthesis; chorismate biosynthesis; chorismate from D-erythrose 4-phosphate and phosphoenolpyruvate: step 3/7. In terms of biological role, involved in the third step of the chorismate pathway, which leads to the biosynthesis of aromatic amino acids. Catalyzes the cis-dehydration of 3-dehydroquinate (DHQ) and introduces the first double bond of the aromatic ring to yield 3-dehydroshikimate. This chain is 3-dehydroquinate dehydratase, found in Staphylococcus aureus (strain bovine RF122 / ET3-1).